The primary structure comprises 421 residues: Phaseolin, beta-type (421 aa).

Positions 1–24 (MMRARVPLLLLGILFLASLSASFA) are cleaved as a signal peptide. The 154-residue stretch at 237 to 390 (KSLSKQDNTI…TFSGSGDEVM (154 aa)) folds into the Cupin type-1 domain. 2 N-linked (GlcNAc...) asparagine glycosylation sites follow: N252 and N341.

It belongs to the 7S seed storage protein family. Homotrimer that associates to form a dodecamer.

The protein localises to the vacuole. Its subcellular location is the aleurone grain. Its function is as follows. Major seed storage protein. The chain is Phaseolin, beta-type from Phaseolus vulgaris (Kidney bean).